The primary structure comprises 352 residues: Protein RecA (352 aa).

Gly68 to Thr75 contacts ATP.

The protein belongs to the RecA family.

The protein resides in the cytoplasm. In terms of biological role, can catalyze the hydrolysis of ATP in the presence of single-stranded DNA, the ATP-dependent uptake of single-stranded DNA by duplex DNA, and the ATP-dependent hybridization of homologous single-stranded DNAs. It interacts with LexA causing its activation and leading to its autocatalytic cleavage. The chain is Protein RecA from Clostridium perfringens (strain ATCC 13124 / DSM 756 / JCM 1290 / NCIMB 6125 / NCTC 8237 / Type A).